We begin with the raw amino-acid sequence, 414 residues long: MLVIEDVRAYEVLDSRGNPTVKAEVTLSDGSVGAAIVPSGASTGSKEALELRDNDERFGGKGVLKAVANVNETIADEILGLDAFNQTQLDDTLRELDGTNNYSNLGANATLGVSMATARAAAAALGMPLYRYLGGANASILPVPMCNIINGGAHANNNVDFQEFMIMPFGFTSFKEALRSVCEIYVILKKELANSGHSTALGDEGGFAPNLANNTEPIDLLMTCIKKAGYENRVKIALDVASTEFFKDGKYHMEGKAFSSEDLIERYVELCAKYPICSIEDGLAENDFEGWIKLTEKLGNKIQLVGDDLFVTNEDILREGIIKKMANAVLIKPNQIGTITQTMRTVRLAQRNNYKCVMSHRSGESEDAFIADFAVALNTGQIKTGALARGERTAKYNRLLEIELESDEYLGEKL.

Gln162 lines the (2R)-2-phosphoglycerate pocket. The active-site Proton donor is Glu204. Asp239, Glu280, and Asp307 together coordinate Mg(2+). (2R)-2-phosphoglycerate is bound by residues Lys332, Arg361, Ser362, and Lys383. Lys332 functions as the Proton acceptor in the catalytic mechanism.

It belongs to the enolase family. The cofactor is Mg(2+).

Its subcellular location is the cytoplasm. It localises to the secreted. The protein localises to the cell surface. It carries out the reaction (2R)-2-phosphoglycerate = phosphoenolpyruvate + H2O. It functions in the pathway carbohydrate degradation; glycolysis; pyruvate from D-glyceraldehyde 3-phosphate: step 4/5. Its function is as follows. Catalyzes the reversible conversion of 2-phosphoglycerate (2-PG) into phosphoenolpyruvate (PEP). It is essential for the degradation of carbohydrates via glycolysis. This Campylobacter jejuni (strain RM1221) protein is Enolase.